The primary structure comprises 228 residues: Cytochrome c oxidase subunit 2 (228 aa).

Residues 1–26 are Mitochondrial intermembrane-facing; the sequence is MATWNNLNLQNGASPLMEQIIFFHDH. Residues 27–48 traverse the membrane as a helical segment; the sequence is TLIILIMITILVGYLMINLFFN. The Mitochondrial matrix portion of the chain corresponds to 49 to 62; that stretch reads KYINRFLLEGQMIE. A helical membrane pass occupies residues 63-82; the sequence is LIWTILPAITLIFIALPSLR. The Mitochondrial intermembrane portion of the chain corresponds to 83-228; the sequence is LLYLLDELNN…FIKWINNYSS (146 aa). 6 residues coordinate Cu cation: His-161, Cys-196, Glu-198, Cys-200, His-204, and Met-207. Residue Glu-198 participates in Mg(2+) binding.

Belongs to the cytochrome c oxidase subunit 2 family. As to quaternary structure, component of the cytochrome c oxidase (complex IV, CIV), a multisubunit enzyme composed of a catalytic core of 3 subunits and several supernumerary subunits. The complex exists as a monomer or a dimer and forms supercomplexes (SCs) in the inner mitochondrial membrane with ubiquinol-cytochrome c oxidoreductase (cytochrome b-c1 complex, complex III, CIII). Cu cation serves as cofactor.

The protein resides in the mitochondrion inner membrane. It carries out the reaction 4 Fe(II)-[cytochrome c] + O2 + 8 H(+)(in) = 4 Fe(III)-[cytochrome c] + 2 H2O + 4 H(+)(out). Component of the cytochrome c oxidase, the last enzyme in the mitochondrial electron transport chain which drives oxidative phosphorylation. The respiratory chain contains 3 multisubunit complexes succinate dehydrogenase (complex II, CII), ubiquinol-cytochrome c oxidoreductase (cytochrome b-c1 complex, complex III, CIII) and cytochrome c oxidase (complex IV, CIV), that cooperate to transfer electrons derived from NADH and succinate to molecular oxygen, creating an electrochemical gradient over the inner membrane that drives transmembrane transport and the ATP synthase. Cytochrome c oxidase is the component of the respiratory chain that catalyzes the reduction of oxygen to water. Electrons originating from reduced cytochrome c in the intermembrane space (IMS) are transferred via the dinuclear copper A center (CU(A)) of subunit 2 and heme A of subunit 1 to the active site in subunit 1, a binuclear center (BNC) formed by heme A3 and copper B (CU(B)). The BNC reduces molecular oxygen to 2 water molecules using 4 electrons from cytochrome c in the IMS and 4 protons from the mitochondrial matrix. The polypeptide is Cytochrome c oxidase subunit 2 (COII) (Yponomeuta malinellus (European small ermine moth)).